We begin with the raw amino-acid sequence, 348 residues long: Isopentenyl-diphosphate delta-isomerase (348 aa).

Residue 14–15 participates in substrate binding; that stretch reads RK. Residues Ser72, 73–75, Ser103, and Asn131 each bind FMN; that span reads SMT. Substrate is bound at residue 103 to 105; it reads SQR. Gln166 contacts substrate. Glu167 provides a ligand contact to Mg(2+). FMN is bound by residues Lys198, Thr228, 278 to 280, and 299 to 300; these read GIR and AR.

It belongs to the IPP isomerase type 2 family. Homooctamer. Dimer of tetramers. Requires FMN as cofactor. The cofactor is NADPH. It depends on Mg(2+) as a cofactor.

The protein localises to the cytoplasm. The catalysed reaction is isopentenyl diphosphate = dimethylallyl diphosphate. Functionally, involved in the biosynthesis of isoprenoids. Catalyzes the 1,3-allylic rearrangement of the homoallylic substrate isopentenyl (IPP) to its allylic isomer, dimethylallyl diphosphate (DMAPP). In Synechococcus sp. (strain ATCC 27144 / PCC 6301 / SAUG 1402/1) (Anacystis nidulans), this protein is Isopentenyl-diphosphate delta-isomerase.